A 590-amino-acid chain; its full sequence is Urease subunit alpha (590 aa).

The 457-residue stretch at 134–590 folds into the Urease domain; sequence GGIDSHIHFI…LPLAQRYFLF (457 aa). The Ni(2+) site is built by His-139, His-141, and Lys-222. An N6-carboxylysine modification is found at Lys-222. Residue His-224 coordinates substrate. Ni(2+) contacts are provided by His-251 and His-277. His-325 serves as the catalytic Proton donor. Asp-365 contributes to the Ni(2+) binding site. Residues 388 to 416 are disordered; that stretch reads QQRGWLSPPAAGQGAGLSSAAGQGVDHDT. Residues 393–411 are compositionally biased toward low complexity; sequence LSPPAAGQGAGLSSAAGQG.

It belongs to the metallo-dependent hydrolases superfamily. Urease alpha subunit family. In terms of assembly, heterotrimer of UreA (gamma), UreB (beta) and UreC (alpha) subunits. Three heterotrimers associate to form the active enzyme. The cofactor is Ni cation. In terms of processing, carboxylation allows a single lysine to coordinate two nickel ions.

It localises to the cytoplasm. It carries out the reaction urea + 2 H2O + H(+) = hydrogencarbonate + 2 NH4(+). It participates in nitrogen metabolism; urea degradation; CO(2) and NH(3) from urea (urease route): step 1/1. The polypeptide is Urease subunit alpha (Verminephrobacter eiseniae (strain EF01-2)).